We begin with the raw amino-acid sequence, 200 residues long: FMN-dependent NADH:quinone oxidoreductase (200 aa).

Residues Ser-10, 96 to 99 (MYNF), and 140 to 143 (SRGG) contribute to the FMN site.

Belongs to the azoreductase type 1 family. As to quaternary structure, homodimer. FMN serves as cofactor.

It carries out the reaction 2 a quinone + NADH + H(+) = 2 a 1,4-benzosemiquinone + NAD(+). The catalysed reaction is N,N-dimethyl-1,4-phenylenediamine + anthranilate + 2 NAD(+) = 2-(4-dimethylaminophenyl)diazenylbenzoate + 2 NADH + 2 H(+). Quinone reductase that provides resistance to thiol-specific stress caused by electrophilic quinones. Its function is as follows. Also exhibits azoreductase activity. Catalyzes the reductive cleavage of the azo bond in aromatic azo compounds to the corresponding amines. This chain is FMN-dependent NADH:quinone oxidoreductase, found in Photorhabdus laumondii subsp. laumondii (strain DSM 15139 / CIP 105565 / TT01) (Photorhabdus luminescens subsp. laumondii).